Reading from the N-terminus, the 64-residue chain is Defensin-like protein 41 (64 aa).

Residues 1-21 (MTQGKRKHPCDLKNPSKRAPP) form a disordered region. Cystine bridges form between Cys-10–Cys-61, Cys-24–Cys-47, Cys-33–Cys-56, and Cys-37–Cys-58.

It belongs to the DEFL family.

The sequence is that of Defensin-like protein 41 from Arabidopsis thaliana (Mouse-ear cress).